A 388-amino-acid chain; its full sequence is Arginine biosynthesis bifunctional protein ArgJ 2 (388 aa).

Residues threonine 145, lysine 167, threonine 178, glutamate 257, and asparagine 381 each contribute to the substrate site. Threonine 178 serves as the catalytic Nucleophile.

The protein belongs to the ArgJ family. Heterotetramer of two alpha and two beta chains.

The protein localises to the cytoplasm. The enzyme catalyses N(2)-acetyl-L-ornithine + L-glutamate = N-acetyl-L-glutamate + L-ornithine. The catalysed reaction is L-glutamate + acetyl-CoA = N-acetyl-L-glutamate + CoA + H(+). Its pathway is amino-acid biosynthesis; L-arginine biosynthesis; L-ornithine and N-acetyl-L-glutamate from L-glutamate and N(2)-acetyl-L-ornithine (cyclic): step 1/1. It participates in amino-acid biosynthesis; L-arginine biosynthesis; N(2)-acetyl-L-ornithine from L-glutamate: step 1/4. Its function is as follows. Catalyzes two activities which are involved in the cyclic version of arginine biosynthesis: the synthesis of N-acetylglutamate from glutamate and acetyl-CoA as the acetyl donor, and of ornithine by transacetylation between N(2)-acetylornithine and glutamate. This Clostridium acetobutylicum (strain ATCC 824 / DSM 792 / JCM 1419 / IAM 19013 / LMG 5710 / NBRC 13948 / NRRL B-527 / VKM B-1787 / 2291 / W) protein is Arginine biosynthesis bifunctional protein ArgJ 2.